Here is a 121-residue protein sequence, read N- to C-terminus: Large ribosomal subunit protein uL22 (121 aa).

This sequence belongs to the universal ribosomal protein uL22 family. In terms of assembly, part of the 50S ribosomal subunit.

This protein binds specifically to 23S rRNA; its binding is stimulated by other ribosomal proteins, e.g. L4, L17, and L20. It is important during the early stages of 50S assembly. It makes multiple contacts with different domains of the 23S rRNA in the assembled 50S subunit and ribosome. Its function is as follows. The globular domain of the protein is located near the polypeptide exit tunnel on the outside of the subunit, while an extended beta-hairpin is found that lines the wall of the exit tunnel in the center of the 70S ribosome. The protein is Large ribosomal subunit protein uL22 of Rickettsia massiliae (strain Mtu5).